A 689-amino-acid chain; its full sequence is DNA ligase (689 aa).

Residues 35–39 (DEVYD), 84–85 (SL), and Glu122 contribute to the NAD(+) site. Lys124 acts as the N6-AMP-lysine intermediate in catalysis. Positions 145, 182, 308, and 332 each coordinate NAD(+). Cys426, Cys429, Cys444, and Cys449 together coordinate Zn(2+). The 78-residue stretch at 612 to 689 (TTEKSLNGKR…NETELIQMCR (78 aa)) folds into the BRCT domain.

The protein belongs to the NAD-dependent DNA ligase family. LigA subfamily. Mg(2+) is required as a cofactor. The cofactor is Mn(2+).

It catalyses the reaction NAD(+) + (deoxyribonucleotide)n-3'-hydroxyl + 5'-phospho-(deoxyribonucleotide)m = (deoxyribonucleotide)n+m + AMP + beta-nicotinamide D-nucleotide.. Its function is as follows. DNA ligase that catalyzes the formation of phosphodiester linkages between 5'-phosphoryl and 3'-hydroxyl groups in double-stranded DNA using NAD as a coenzyme and as the energy source for the reaction. It is essential for DNA replication and repair of damaged DNA. The protein is DNA ligase of Thermosynechococcus vestitus (strain NIES-2133 / IAM M-273 / BP-1).